A 520-amino-acid chain; its full sequence is Ribonuclease Y (520 aa).

The chain crosses the membrane as a helical span at residues 3 to 23; it reads IVIVVISILLALIVGIVVGYL. Basic and acidic residues predominate over residues 81 to 118; sequence RMEAQKQENRLMQKEENLDRKSETLDKRESSLESKEQS. The interval 81–125 is disordered; that stretch reads RMEAQKQENRLMQKEENLDRKSETLDKRESSLESKEQSLTEQQQQ. A KH domain is found at 210-273; that stretch reads TVSVVNLPND…EIARMALEKL (64 aa). Residues 336 to 429 form the HD domain; the sequence is GLKHSAEVAY…VAAADALSAA (94 aa).

This sequence belongs to the RNase Y family.

The protein resides in the cell membrane. In terms of biological role, endoribonuclease that initiates mRNA decay. The chain is Ribonuclease Y from Oceanobacillus iheyensis (strain DSM 14371 / CIP 107618 / JCM 11309 / KCTC 3954 / HTE831).